The sequence spans 440 residues: Enolase (440 aa).

The segment at 120–189 (KAAAAEKRVP…TEAMRQGAEV (70 aa)) is igE-binding determinant. The substrate site is built by His-159 and Glu-168. Glu-211 serves as the catalytic Proton donor. Mg(2+)-binding residues include Asp-246, Glu-297, and Asp-324. Glu-297 and Asp-324 together coordinate substrate. Lys-349 serves as the catalytic Proton acceptor. Substrate-binding positions include 376–379 (SHRS) and Lys-400.

Belongs to the enolase family. Homodimer. Requires Mg(2+) as cofactor.

It localises to the cytoplasm. It catalyses the reaction (2R)-2-phosphoglycerate = phosphoenolpyruvate + H2O. The protein operates within carbohydrate degradation; glycolysis; pyruvate from D-glyceraldehyde 3-phosphate: step 4/5. This chain is Enolase (ENO), found in Davidiella tassiana (Mycosphaerella tassiana).